We begin with the raw amino-acid sequence, 396 residues long: Small ribosomal subunit protein uS9m (396 aa).

Residues proline 374–arginine 396 form a disordered region.

It belongs to the universal ribosomal protein uS9 family. In terms of assembly, component of the mitochondrial ribosome small subunit (28S) which comprises a 12S rRNA and about 30 distinct proteins.

The protein resides in the mitochondrion. This is Small ribosomal subunit protein uS9m (MRPS9) from Bos taurus (Bovine).